The primary structure comprises 233 residues: Uridylate kinase (233 aa).

Residues lysine 8 to glycine 11, glycine 51, and arginine 55 contribute to the ATP site. Residues aspartate 68 and threonine 129–threonine 136 contribute to the UMP site. The ATP site is built by threonine 156, tyrosine 162, and aspartate 165.

This sequence belongs to the UMP kinase family. Homohexamer.

The protein localises to the cytoplasm. It catalyses the reaction UMP + ATP = UDP + ADP. It participates in pyrimidine metabolism; CTP biosynthesis via de novo pathway; UDP from UMP (UMPK route): step 1/1. Inhibited by UTP. Functionally, catalyzes the reversible phosphorylation of UMP to UDP. The polypeptide is Uridylate kinase (Pseudothermotoga lettingae (strain ATCC BAA-301 / DSM 14385 / NBRC 107922 / TMO) (Thermotoga lettingae)).